The sequence spans 636 residues: Translation factor GUF1 homolog, chloroplastic (636 aa).

The 182-residue stretch at 31 to 212 (NLARNFSIIA…AIVTKIPPPQ (182 aa)) folds into the tr-type G domain. GTP-binding positions include 40-47 (AHIDHGKS), 105-109 (DTPGH), and 159-162 (NKID).

Belongs to the TRAFAC class translation factor GTPase superfamily. Classic translation factor GTPase family. LepA subfamily.

It localises to the plastid. The protein localises to the chloroplast. It catalyses the reaction GTP + H2O = GDP + phosphate + H(+). In terms of biological role, promotes chloroplast protein synthesis. May act as a fidelity factor of the translation reaction, by catalyzing a one-codon backward translocation of tRNAs on improperly translocated ribosomes. The chain is Translation factor GUF1 homolog, chloroplastic from Oryza sativa subsp. indica (Rice).